A 65-amino-acid chain; its full sequence is Large ribosomal subunit protein bL35 (65 aa).

Belongs to the bacterial ribosomal protein bL35 family.

This chain is Large ribosomal subunit protein bL35, found in Prochlorococcus marinus (strain MIT 9313).